Here is a 352-residue protein sequence, read N- to C-terminus: Ion-translocating oxidoreductase complex subunit D (352 aa).

4 helical membrane-spanning segments follow: residues I20–G40, G42–L62, I89–A109, and P123–L143. Residue T187 is modified to FMN phosphoryl threonine. The next 5 membrane-spanning stretches (helical) occupy residues I214 to L234, W242 to F262, L267 to L287, L301 to P321, and D322 to T342.

The protein belongs to the NqrB/RnfD family. As to quaternary structure, the complex is composed of six subunits: RsxA, RsxB, RsxC, RsxD, RsxE and RsxG. Requires FMN as cofactor.

The protein localises to the cell inner membrane. In terms of biological role, part of a membrane-bound complex that couples electron transfer with translocation of ions across the membrane. Required to maintain the reduced state of SoxR. The chain is Ion-translocating oxidoreductase complex subunit D from Escherichia coli O127:H6 (strain E2348/69 / EPEC).